A 534-amino-acid polypeptide reads, in one-letter code: CTP synthase (534 aa).

The tract at residues 1–265 (MKYIVVTGGV…TTQLMKHLRL (265 aa)) is amidoligase domain. Position 12 (Ser12) interacts with CTP. A UTP-binding site is contributed by Ser12. 13–18 (GLGKGI) is an ATP binding site. Tyr53 serves as a coordination point for L-glutamine. Asp70 is a binding site for ATP. 2 residues coordinate Mg(2+): Asp70 and Glu140. CTP-binding positions include 147-149 (DIE), 186-191 (KTKPTQ), and Lys222. UTP contacts are provided by residues 186-191 (KTKPTQ) and Lys222. The Glutamine amidotransferase type-1 domain occupies 289 to 530 (KLAIVGKYTN…VRAMCKYRKE (242 aa)). Gly352 provides a ligand contact to L-glutamine. Catalysis depends on Cys379, which acts as the Nucleophile; for glutamine hydrolysis. L-glutamine contacts are provided by residues 380-383 (LGMQ), Glu403, and Arg460. Active-site residues include His503 and Glu505.

Belongs to the CTP synthase family. As to quaternary structure, homotetramer.

The catalysed reaction is UTP + L-glutamine + ATP + H2O = CTP + L-glutamate + ADP + phosphate + 2 H(+). It catalyses the reaction L-glutamine + H2O = L-glutamate + NH4(+). It carries out the reaction UTP + NH4(+) + ATP = CTP + ADP + phosphate + 2 H(+). It participates in pyrimidine metabolism; CTP biosynthesis via de novo pathway; CTP from UDP: step 2/2. Its activity is regulated as follows. Allosterically activated by GTP, when glutamine is the substrate; GTP has no effect on the reaction when ammonia is the substrate. The allosteric effector GTP functions by stabilizing the protein conformation that binds the tetrahedral intermediate(s) formed during glutamine hydrolysis. Inhibited by the product CTP, via allosteric rather than competitive inhibition. Its function is as follows. Catalyzes the ATP-dependent amination of UTP to CTP with either L-glutamine or ammonia as the source of nitrogen. Regulates intracellular CTP levels through interactions with the four ribonucleotide triphosphates. The chain is CTP synthase from Methanosarcina mazei (strain ATCC BAA-159 / DSM 3647 / Goe1 / Go1 / JCM 11833 / OCM 88) (Methanosarcina frisia).